The following is a 406-amino-acid chain: 2,3-bisphosphoglycerate-independent phosphoglycerate mutase (406 aa).

The segment at 156–183 (NLSDKISDSDPHSEGKPPEPIRPLDPSA) is disordered. The span at 160–174 (KISDSDPHSEGKPPE) shows a compositional bias: basic and acidic residues.

The protein belongs to the BPG-independent phosphoglycerate mutase family. A-PGAM subfamily.

The catalysed reaction is (2R)-2-phosphoglycerate = (2R)-3-phosphoglycerate. Its pathway is carbohydrate degradation; glycolysis; pyruvate from D-glyceraldehyde 3-phosphate: step 3/5. Catalyzes the interconversion of 2-phosphoglycerate and 3-phosphoglycerate. The sequence is that of 2,3-bisphosphoglycerate-independent phosphoglycerate mutase from Thermoplasma volcanium (strain ATCC 51530 / DSM 4299 / JCM 9571 / NBRC 15438 / GSS1).